We begin with the raw amino-acid sequence, 217 residues long: tRNA (guanine-N(7)-)-methyltransferase (217 aa).

S-adenosyl-L-methionine-binding residues include glutamate 44, glutamate 69, aspartate 96, and aspartate 118. Aspartate 118 is a catalytic residue. Substrate contacts are provided by residues lysine 122, aspartate 154, and 191-194 (TEYE).

This sequence belongs to the class I-like SAM-binding methyltransferase superfamily. TrmB family.

The catalysed reaction is guanosine(46) in tRNA + S-adenosyl-L-methionine = N(7)-methylguanosine(46) in tRNA + S-adenosyl-L-homocysteine. The protein operates within tRNA modification; N(7)-methylguanine-tRNA biosynthesis. Its function is as follows. Catalyzes the formation of N(7)-methylguanine at position 46 (m7G46) in tRNA. The polypeptide is tRNA (guanine-N(7)-)-methyltransferase (Bacillus cereus (strain B4264)).